Reading from the N-terminus, the 61-residue chain is uncharacterized protein (61 aa).

This is an uncharacterized protein from Enterobacteria phage T4 (Bacteriophage T4).